The chain runs to 196 residues: MAKQPSDVNSECDREGGQLQPAERPPQLRPGAPTSLQTESQGNPDGEGDRCPHGSPQGPLAPPASPGPFATRSPLFIFVRRSSLLSRSSSGYFSFDTDRSPAPMSCDKSTQTPSPPCQAFNHYLSAMASIRQSQEEPEDLRPEIRIAQELRRIGDEFNETYTRRAFANDYREAEDHPQMVILQLLRFIFRLVWRRH.

A disordered region spans residues 1-68; that stretch reads MAKQPSDVNS…PLAPPASPGP (68 aa). Residues 34 to 43 are compositionally biased toward polar residues; that stretch reads TSLQTESQGN. Ser-65 is subject to Phosphoserine; by MAPK. 3 positions are modified to phosphoserine: Ser-73, Ser-83, and Ser-90. A disordered region spans residues 90–114; that stretch reads SGYFSFDTDRSPAPMSCDKSTQTPS. Positions 146 to 160 match the BH3 motif; the sequence is IAQELRRIGDEFNET.

The protein belongs to the Bcl-2 family. Forms heterodimers with a number of antiapoptotic Bcl-2 proteins, including MCL1, BCL2, BCL2L1 isoform Bcl-X(L), BCL2A1/BFL-1, and BCL2L2/BCLW. Does not heterodimerize with proapoptotic proteins such as BAD, BOK or BAK. Identified in a complex containing BCL2L11, DYNLL1 and BCL2L1 isoform Bcl-X(L); BH3 integrity is required for BCL2L1-binding. Interacts with YWHAZ. When phosphorylated, interacts with TRIM2; this interaction is associated with ubiquitination and degradation. Interacts (via BH3) with MCL1; this interaction may sequester BCL2L11 and prevent its pro-apoptotic activity. When phosphorylated, isoform BimEL interacts with USP27X; this interaction leads to BCL2L11 deubiquitination and stabilization. Interacts with GIMAP5. Interacts with BCL2L10/BCL-B. Phosphorylation at Ser-65 by MAPK1/MAPK3 leads interaction with TRIM2 and ubiquitination, followed by proteasomal degradation. Deubiquitination catalyzed by USP27X stabilizes the protein. In terms of processing, ubiquitination by TRIM2 following phosphorylation by MAPK1/MAPK3 leads to proteasomal degradation. Conversely, deubiquitination catalyzed by USP27X stabilizes the protein. As to expression, widely expressed.

The protein localises to the membrane. It localises to the mitochondrion. In terms of biological role, induces apoptosis and anoikis. The protein is Bcl-2-like protein 11 (Bcl2l11) of Rattus norvegicus (Rat).